A 306-amino-acid chain; its full sequence is ATP-dependent (S)-NAD(P)H-hydrate dehydratase (306 aa).

The YjeF C-terminal domain occupies 4–300 (LIDLFKPMIP…NQISNGFEDL (297 aa)). (6S)-NADPHX is bound by residues Gly104 and 157–163 (NFVEFKS). ATP is bound by residues 197–201 (KGKED) and 216–225 (GMPRRCGGQG). Asp226 contacts (6S)-NADPHX.

Belongs to the NnrD/CARKD family. Mg(2+) is required as a cofactor.

It catalyses the reaction (6S)-NADHX + ATP = ADP + phosphate + NADH + H(+). The enzyme catalyses (6S)-NADPHX + ATP = ADP + phosphate + NADPH + H(+). In terms of biological role, catalyzes the dehydration of the S-form of NAD(P)HX at the expense of ATP, which is converted to ADP. Together with NAD(P)HX epimerase, which catalyzes the epimerization of the S- and R-forms, the enzyme allows the repair of both epimers of NAD(P)HX, a damaged form of NAD(P)H that is a result of enzymatic or heat-dependent hydration. This is ATP-dependent (S)-NAD(P)H-hydrate dehydratase from Dictyostelium discoideum (Social amoeba).